Here is a 572-residue protein sequence, read N- to C-terminus: Proline--tRNA ligase (572 aa).

This sequence belongs to the class-II aminoacyl-tRNA synthetase family. ProS type 1 subfamily. As to quaternary structure, homodimer.

Its subcellular location is the cytoplasm. It carries out the reaction tRNA(Pro) + L-proline + ATP = L-prolyl-tRNA(Pro) + AMP + diphosphate. In terms of biological role, catalyzes the attachment of proline to tRNA(Pro) in a two-step reaction: proline is first activated by ATP to form Pro-AMP and then transferred to the acceptor end of tRNA(Pro). As ProRS can inadvertently accommodate and process non-cognate amino acids such as alanine and cysteine, to avoid such errors it has two additional distinct editing activities against alanine. One activity is designated as 'pretransfer' editing and involves the tRNA(Pro)-independent hydrolysis of activated Ala-AMP. The other activity is designated 'posttransfer' editing and involves deacylation of mischarged Ala-tRNA(Pro). The misacylated Cys-tRNA(Pro) is not edited by ProRS. This Salmonella arizonae (strain ATCC BAA-731 / CDC346-86 / RSK2980) protein is Proline--tRNA ligase.